Here is a 207-residue protein sequence, read N- to C-terminus: dTTP/UTP pyrophosphatase (207 aa).

Asp87 (proton acceptor) is an active-site residue.

The protein belongs to the Maf family. YhdE subfamily. A divalent metal cation serves as cofactor.

Its subcellular location is the cytoplasm. It carries out the reaction dTTP + H2O = dTMP + diphosphate + H(+). It catalyses the reaction UTP + H2O = UMP + diphosphate + H(+). Functionally, nucleoside triphosphate pyrophosphatase that hydrolyzes dTTP and UTP. May have a dual role in cell division arrest and in preventing the incorporation of modified nucleotides into cellular nucleic acids. This is dTTP/UTP pyrophosphatase from Bordetella bronchiseptica (strain ATCC BAA-588 / NCTC 13252 / RB50) (Alcaligenes bronchisepticus).